Here is a 193-residue protein sequence, read N- to C-terminus: Molybdenum cofactor guanylyltransferase (193 aa).

Residues 8–10 (LAG), Lys21, Asp67, and Asp98 each bind GTP. Asp98 provides a ligand contact to Mg(2+).

The protein belongs to the MobA family. As to quaternary structure, monomer. Mg(2+) serves as cofactor.

Its subcellular location is the cytoplasm. It carries out the reaction Mo-molybdopterin + GTP + H(+) = Mo-molybdopterin guanine dinucleotide + diphosphate. In terms of biological role, transfers a GMP moiety from GTP to Mo-molybdopterin (Mo-MPT) cofactor (Moco or molybdenum cofactor) to form Mo-molybdopterin guanine dinucleotide (Mo-MGD) cofactor. This is Molybdenum cofactor guanylyltransferase from Cereibacter sphaeroides (strain ATCC 17023 / DSM 158 / JCM 6121 / CCUG 31486 / LMG 2827 / NBRC 12203 / NCIMB 8253 / ATH 2.4.1.) (Rhodobacter sphaeroides).